A 197-amino-acid polypeptide reads, in one-letter code: Imidazoleglycerol-phosphate dehydratase (197 aa).

This sequence belongs to the imidazoleglycerol-phosphate dehydratase family.

Its subcellular location is the cytoplasm. It catalyses the reaction D-erythro-1-(imidazol-4-yl)glycerol 3-phosphate = 3-(imidazol-4-yl)-2-oxopropyl phosphate + H2O. It functions in the pathway amino-acid biosynthesis; L-histidine biosynthesis; L-histidine from 5-phospho-alpha-D-ribose 1-diphosphate: step 6/9. In Teredinibacter turnerae (strain ATCC 39867 / T7901), this protein is Imidazoleglycerol-phosphate dehydratase.